We begin with the raw amino-acid sequence, 351 residues long: Fe(3+) ions import ATP-binding protein FbpC (351 aa).

Residues 7–241 (LTVKNLNKFF…PNHLETAKFM (235 aa)) form the ABC transporter domain. 39 to 46 (GASGCGKT) contributes to the ATP binding site.

The protein belongs to the ABC transporter superfamily. Fe(3+) ion importer (TC 3.A.1.10) family. As to quaternary structure, the complex is composed of two ATP-binding proteins (FbpC), two transmembrane proteins (FbpB) and a solute-binding protein (FbpA).

The protein resides in the cell inner membrane. It catalyses the reaction Fe(3+)(out) + ATP + H2O = Fe(3+)(in) + ADP + phosphate + H(+). In terms of biological role, part of the ABC transporter complex FbpABC involved in Fe(3+) ions import. Responsible for energy coupling to the transport system. The sequence is that of Fe(3+) ions import ATP-binding protein FbpC from Haemophilus influenzae (strain 86-028NP).